Reading from the N-terminus, the 168-residue chain is Cytochrome c oxidase subunit 2 (168 aa).

The Cytoplasmic portion of the chain corresponds to 1-3 (MVD). Residues 4–38 (EHKAHKAILAYEKGWLAFSLAMLFVFIALIAYTLA) traverse the membrane as a helical segment. The Periplasmic segment spans residues 39–168 (THTAGVIPAG…NMFGTIVVKE (130 aa)). Cu cation-binding residues include H114, C149, C153, and H157.

It belongs to the cytochrome c oxidase subunit 2 family.

The protein resides in the cell membrane. The enzyme catalyses 4 Fe(II)-[cytochrome c] + O2 + 8 H(+)(in) = 4 Fe(III)-[cytochrome c] + 2 H2O + 4 H(+)(out). In terms of biological role, subunits I and II form the functional core of the enzyme complex. Electrons originating in cytochrome c are transferred via heme a and Cu(A) to the binuclear center formed by heme a3 and Cu(B). This chain is Cytochrome c oxidase subunit 2 (cbaB), found in Thermus thermophilus (strain ATCC 27634 / DSM 579 / HB8).